We begin with the raw amino-acid sequence, 220 residues long: N-(5'-phosphoribosyl)anthranilate isomerase (220 aa).

It belongs to the TrpF family.

The enzyme catalyses N-(5-phospho-beta-D-ribosyl)anthranilate = 1-(2-carboxyphenylamino)-1-deoxy-D-ribulose 5-phosphate. It functions in the pathway amino-acid biosynthesis; L-tryptophan biosynthesis; L-tryptophan from chorismate: step 3/5. The protein is N-(5'-phosphoribosyl)anthranilate isomerase of Xylella fastidiosa (strain 9a5c).